The chain runs to 389 residues: Lipid-A-disaccharide synthase (389 aa).

The protein belongs to the LpxB family.

It catalyses the reaction a lipid X + a UDP-2-N,3-O-bis[(3R)-3-hydroxyacyl]-alpha-D-glucosamine = a lipid A disaccharide + UDP + H(+). It functions in the pathway bacterial outer membrane biogenesis; LPS lipid A biosynthesis. In terms of biological role, condensation of UDP-2,3-diacylglucosamine and 2,3-diacylglucosamine-1-phosphate to form lipid A disaccharide, a precursor of lipid A, a phosphorylated glycolipid that anchors the lipopolysaccharide to the outer membrane of the cell. In Burkholderia lata (strain ATCC 17760 / DSM 23089 / LMG 22485 / NCIMB 9086 / R18194 / 383), this protein is Lipid-A-disaccharide synthase.